We begin with the raw amino-acid sequence, 352 residues long: Uroporphyrinogen decarboxylase (352 aa).

Residues 26–30, Phe45, Asp76, Tyr153, Ser208, and His323 each bind substrate; that span reads RQAGR.

Belongs to the uroporphyrinogen decarboxylase family. As to quaternary structure, homodimer.

It localises to the cytoplasm. The catalysed reaction is uroporphyrinogen III + 4 H(+) = coproporphyrinogen III + 4 CO2. It participates in porphyrin-containing compound metabolism; protoporphyrin-IX biosynthesis; coproporphyrinogen-III from 5-aminolevulinate: step 4/4. Catalyzes the decarboxylation of four acetate groups of uroporphyrinogen-III to yield coproporphyrinogen-III. This Prochlorococcus marinus (strain MIT 9313) protein is Uroporphyrinogen decarboxylase.